A 325-amino-acid polypeptide reads, in one-letter code: Putative gluconeogenesis factor (325 aa).

Belongs to the gluconeogenesis factor family.

Its subcellular location is the cytoplasm. In terms of biological role, required for morphogenesis under gluconeogenic growth conditions. This chain is Putative gluconeogenesis factor, found in Streptococcus pyogenes serotype M3 (strain ATCC BAA-595 / MGAS315).